The following is a 203-amino-acid chain: Outer-membrane lipoprotein carrier protein (203 aa).

The first 19 residues, 1–19 (MKKSIVVLFSAVLPFAVFA), serve as a signal peptide directing secretion.

Belongs to the LolA family. In terms of assembly, monomer.

Its subcellular location is the periplasm. Participates in the translocation of lipoproteins from the inner membrane to the outer membrane. Only forms a complex with a lipoprotein if the residue after the N-terminal Cys is not an aspartate (The Asp acts as a targeting signal to indicate that the lipoprotein should stay in the inner membrane). The polypeptide is Outer-membrane lipoprotein carrier protein (Shewanella amazonensis (strain ATCC BAA-1098 / SB2B)).